The chain runs to 707 residues: Acyl-CoA ligase 891, peroxisomal (707 aa).

259 to 270 serves as a coordination point for ATP; that stretch reads INYTSGTTGPPK. Residues 525 to 549 are fatty acid-binding; it reads DGWFRTGDVCTVDAQGRFIIIDRRK. Residues 705 to 707 carry the Peroxisome targeting signal motif; the sequence is AKL.

This sequence belongs to the ATP-dependent AMP-binding enzyme family.

It is found in the peroxisome matrix. The enzyme catalyses (4E,8E)-10-(4-hydroxy-6-methoxy-7-methyl-3-oxo-1,3-dihydro-2-benzofuran-5-yl)-4,8-dimethyldeca-4,8-dienoate + ATP + CoA = (4E,8E)-10-(4-hydroxy-6-methoxy-7-methyl-3-oxo-1,3-dihydro-2-benzofuran-5-yl)-4,8-dimethyldeca-4,8-dienoyl-CoA + AMP + diphosphate. It functions in the pathway secondary metabolite biosynthesis; terpenoid biosynthesis. Its function is as follows. Acyl-CoA ligase involved in the biosynthesis of mycophenolic acid (MPA), the first isolated antibiotic natural product in the world obtained from a culture of Penicillium brevicompactum in 1893. The peroxisomal acyl-CoA ligase 891 converts the intermediate MFDHMP-3C into MFDHMP-3C-CoA which impairs its diffusion from the peroxisome. The first step of the pathway is the synthesis of 5-methylorsellinic acid (5MOA) by the cytosolic polyketide synthase mpaC. 5MOA is then converted to the phthalide compound 5,7-dihydroxy-4,6-dimethylphthalide (DHMP) by the endoplasmic reticulum-bound cytochrome P450 monooxygenase mpaDE. MpaDE first catalyzes hydroxylation of 5-MOA to 4,6-dihydroxy-2-(hydroxymethyl)-3-methylbenzoic acid (DHMB). MpaDE then acts as a lactone synthase that catalyzes the ring closure to convert DHMB into DHMP. The next step is the prenylation of DHMP by the Golgi apparatus-associated prenyltransferase mpaA to yield farnesyl-DHMP (FDHMP). The ER-bound oxygenase mpaB then mediates the oxidative cleavage the C19-C20 double bond in FDHMP to yield FDHMP-3C via a mycophenolic aldehyde intermediate. The O-methyltransferase mpaG catalyzes the methylation of FDHMP-3C to yield MFDHMP-3C. After the cytosolic methylation of FDHMP-3C, MFDHMP-3C enters into peroxisomes probably via free diffusion due to its low molecular weight. Upon a peroxisomal CoA ligation reaction, catalyzed by a beta-oxidation component enzyme acyl-CoA ligase ACL891, MFDHMP-3C-CoA would then be restricted to peroxisomes for the following beta-oxidation pathway steps. The peroxisomal beta-oxidation machinery than converts MFDHMP-3C-CoA into MPA_CoA, via a beta-oxidation chain-shortening process. Finally mpaH acts as a peroxisomal acyl-CoA hydrolase with high substrate specificity toward MPA-CoA to release the final product MPA. This chain is Acyl-CoA ligase 891, peroxisomal, found in Penicillium brevicompactum.